Consider the following 609-residue polypeptide: Alpha-glycerophosphate oxidase (609 aa).

FAD is bound at residue 21–49; it reads DLLVIGGGITGAGLTLQAAAAGMKVAVLE.

Belongs to the FAD-dependent glycerol-3-phosphate dehydrogenase family. The cofactor is FAD.

It is found in the cytoplasm. It carries out the reaction sn-glycerol 3-phosphate + O2 = dihydroxyacetone phosphate + H2O2. The sequence is that of Alpha-glycerophosphate oxidase (glpO) from Lactococcus lactis subsp. lactis (strain IL1403) (Streptococcus lactis).